Reading from the N-terminus, the 123-residue chain is Large ribosomal subunit protein bL12 (123 aa).

Belongs to the bacterial ribosomal protein bL12 family. As to quaternary structure, homodimer. Part of the ribosomal stalk of the 50S ribosomal subunit. Forms a multimeric L10(L12)X complex, where L10 forms an elongated spine to which 2 to 4 L12 dimers bind in a sequential fashion. Binds GTP-bound translation factors.

Its function is as follows. Forms part of the ribosomal stalk which helps the ribosome interact with GTP-bound translation factors. Is thus essential for accurate translation. This is Large ribosomal subunit protein bL12 from Parvibaculum lavamentivorans (strain DS-1 / DSM 13023 / NCIMB 13966).